A 143-amino-acid chain; its full sequence is Transcriptional regulator MraZ (143 aa).

2 SpoVT-AbrB domains span residues Glu-5–Glu-47 and Ala-76–Arg-119.

The protein belongs to the MraZ family. As to quaternary structure, forms oligomers.

The protein resides in the cytoplasm. It is found in the nucleoid. The polypeptide is Transcriptional regulator MraZ (Lactobacillus delbrueckii subsp. bulgaricus (strain ATCC 11842 / DSM 20081 / BCRC 10696 / JCM 1002 / NBRC 13953 / NCIMB 11778 / NCTC 12712 / WDCM 00102 / Lb 14)).